A 180-amino-acid chain; its full sequence is Ferric nitrobindin-like protein (180 aa).

The short motif at Gly-21 to Gly-27 is the GXWXGXG element.

This sequence belongs to the nitrobindin family.

In Kineococcus radiotolerans (strain ATCC BAA-149 / DSM 14245 / SRS30216), this protein is Ferric nitrobindin-like protein.